Here is a 446-residue protein sequence, read N- to C-terminus: MSTSSSSSDNGAGGSGGVFEAPSPSRPRRGANDVWPEPFLESLAVQVAVNASTSAGLLAAAPALANVFRVCTTWHAVSRSDHLWQLLSRQVWARTHLMHDTWRDEFIYRHRTARNFRTRTHTYFTLQFDPSDVDEPDSLSCRCLTLSDLYLAAGFADGTVRLFLLNNRLHVRTLRPPLRDRFGRFSRAVSGIVISDSRLTFATMDGDIHVAEIDGVGHTRTAYAGDIVNDGALVDFTGCGRWWVGLFAGVPGRAFHIWDCNSEETTFVGGTLTDPEAVMGWHTLTELTTSLGRLRISGNETAVACTRWRIMVIDLRNQGVIIGEDEEQRRGLIVTGFDANDEAYVRLDSRGNASVRRVNTQQTVCEFRVSGAAQRRVMGCVNRLHALMCAGGIMRVWEVERGEYLYSIRERVGEVDAIVADDRHVAVASASSTAQSIIHLWDFGAL.

The segment covering 1-10 has biased composition (low complexity); the sequence is MSTSSSSSDN. Positions 1-32 are disordered; sequence MSTSSSSSDNGAGGSGGVFEAPSPSRPRRGAN.

Expressed in inflorescence and floral meristems, young floral organ primordia, and later in ovule primordia.

The protein localises to the nucleus. Its function is as follows. Transcriptional regulator involved in the specification of floral identity. Acts as A class cadastral protein by repressing the C class floral homeotic gene AGAMOUS in the external flower organs in association with APETALA2 and other repressors. Is required to maintain floral meristem identity in concert with AGAMOUS. Also interacts with APETALA2 to ensure the normal development of ovule. In Arabidopsis thaliana (Mouse-ear cress), this protein is Transcriptional regulator STERILE APETALA (SAP).